We begin with the raw amino-acid sequence, 148 residues long: uncharacterized protein (148 aa).

A compositionally biased stretch (low complexity) spans 1 to 17 (MCPPVRQRPAQAPPAKR). Disordered regions lie at residues 1-86 (MCPP…VQSP) and 122-148 (RAHR…TSPC). Positions 38–57 (RPPKMQRRPRPPVAKRRRFP) are enriched in basic residues. Positions 134–148 (QSRQRPSPDSQTSPC) are enriched in polar residues.

Belongs to the Epstein-Barr virus BLLF2 family.

This is an uncharacterized protein from Homo sapiens (Human).